The primary structure comprises 203 residues: uncharacterized protein (203 aa).

Residues 9 to 29 (LVVLFTIVTFGLVSPPAALMA) form a helical membrane-spanning segment.

The protein resides in the membrane. This is an uncharacterized protein from Bacillus subtilis (strain 168).